Here is a 341-residue protein sequence, read N- to C-terminus: Geranylfarnesyl diphosphate synthase (341 aa).

Isopentenyl diphosphate contacts are provided by lysine 47, arginine 50, and glutamine 95. Mg(2+) contacts are provided by aspartate 102 and aspartate 106. Position 111 (arginine 111) interacts with an all-trans-polyprenyl diphosphate. Arginine 112 is an isopentenyl diphosphate binding site. 3 residues coordinate an all-trans-polyprenyl diphosphate: lysine 193, threonine 194, and glutamine 231.

This sequence belongs to the FPP/GGPP synthase family. As to quaternary structure, homodimer. Mg(2+) is required as a cofactor.

The protein resides in the cytoplasm. It catalyses the reaction isopentenyl diphosphate + (2E,6E,10E)-geranylgeranyl diphosphate = (2E,6E,10E,14E)-geranylfarnesyl diphosphate + diphosphate. Its function is as follows. Probably involved in biosynthesis of the precursor for C25 (sesterterpanyl chain) moiety of C20-C25 diether (2-O-sesterterpanyl-3-O-phytanyl-sn-glycer) membrane lipid. Catalyzes the condensation of isopentenyl pyrophosphate with the allylic pyrophosphates to yield geranylfarnesyl diphosphate (GFPP). Geranylgeranyl diphosphate (GGPP) is the preferred substrate, but dimethylallyl diphosphate (DMAPP) and farnesyl diphosphate (FPP) can also be used as allylic substrate. The sequence is that of Geranylfarnesyl diphosphate synthase (idsA3) from Natronomonas pharaonis (strain ATCC 35678 / DSM 2160 / CIP 103997 / JCM 8858 / NBRC 14720 / NCIMB 2260 / Gabara) (Halobacterium pharaonis).